A 292-amino-acid polypeptide reads, in one-letter code: NAD kinase (292 aa).

D73 functions as the Proton acceptor in the catalytic mechanism. Residues 73–74, 147–148, H158, R175, D177, 188–193, and Q247 each bind NAD(+); these read DG, NE, and TAYSLS.

Belongs to the NAD kinase family. It depends on a divalent metal cation as a cofactor.

The protein resides in the cytoplasm. The catalysed reaction is NAD(+) + ATP = ADP + NADP(+) + H(+). In terms of biological role, involved in the regulation of the intracellular balance of NAD and NADP, and is a key enzyme in the biosynthesis of NADP. Catalyzes specifically the phosphorylation on 2'-hydroxyl of the adenosine moiety of NAD to yield NADP. In Salmonella dublin (strain CT_02021853), this protein is NAD kinase.